The following is a 252-amino-acid chain: Floral homeotic protein AGAMOUS (252 aa).

An MADS-box domain is found at 19–73 (RGKIEIKRIENTTNRQVTFCKRRNGLLKKAYELSVLCDAEVALIVFSSRGRLYEY). The region spanning 103–193 (AQYYQQESAK…RAKIAENERN (91 aa)) is the K-box domain.

The protein localises to the nucleus. In terms of biological role, probable transcription factor involved in regulating genes that determines stamen and carpel development in wild-type flowers. This is Floral homeotic protein AGAMOUS (AG1) from Brassica napus (Rape).